Reading from the N-terminus, the 333-residue chain is Protein FanF (333 aa).

An N-terminal signal peptide occupies residues 1-22 (MKNKYNLLFFLFLLCYGDVALA).

In terms of processing, three disulfide bonds are present.

It localises to the fimbrium. Minor component of K99 fimbriae. Is not required for binding of K99 fimbriae to the ganglioside receptor. May play a role in initiation, elongation and flexibility of the fimbriae. The polypeptide is Protein FanF (fanF) (Escherichia coli).